We begin with the raw amino-acid sequence, 500 residues long: Cobyric acid synthase (500 aa).

The GATase cobBQ-type domain occupies 251 to 449; sequence KLNIVIPIMP…LHGVFDHPDA (199 aa). C332 functions as the Nucleophile in the catalytic mechanism. H441 is a catalytic residue.

Belongs to the CobB/CobQ family. CobQ subfamily.

It functions in the pathway cofactor biosynthesis; adenosylcobalamin biosynthesis. In terms of biological role, catalyzes amidations at positions B, D, E, and G on adenosylcobyrinic A,C-diamide. NH(2) groups are provided by glutamine, and one molecule of ATP is hydrogenolyzed for each amidation. The polypeptide is Cobyric acid synthase (Marinomonas sp. (strain MWYL1)).